The primary structure comprises 374 residues: Pectate lyase 1 (374 aa).

The first 22 residues, 1–22 (MKYLLPSAAAGLLLLAAQPTMA), serve as a signal peptide directing secretion. An intrachain disulfide couples cysteine 93 to cysteine 176. The Ca(2+) site is built by aspartate 150, aspartate 152, glutamate 187, and aspartate 191. Arginine 239 is an active-site residue. Cysteine 350 and cysteine 373 are oxidised to a cystine.

It belongs to the polysaccharide lyase 1 family. PLADES subfamily. It depends on Ca(2+) as a cofactor.

The protein resides in the secreted. The catalysed reaction is Eliminative cleavage of (1-&gt;4)-alpha-D-galacturonan to give oligosaccharides with 4-deoxy-alpha-D-galact-4-enuronosyl groups at their non-reducing ends.. Its pathway is glycan metabolism; pectin degradation; 2-dehydro-3-deoxy-D-gluconate from pectin: step 2/5. Involved in maceration and soft-rotting of plant tissue. The sequence is that of Pectate lyase 1 (pel1) from Pectobacterium carotovorum (Erwinia carotovora).